The following is a 317-amino-acid chain: MPLRVIFMGTPEFSVPTLRAIAKAGHEISAVYTQPPRAAGRRGLELTPSPVQREAERLGIEVRTPTSLKGEAEQAAFNALRADIAVVVAYGLLLPKVILDAPRLGCINGHASLLPRWRGAAPIQRAIMAGDLESGMMVMRMEEGLDTGPVGLLEKCAIDPDMTAGDLHDRLMRVGAALMVEALARLAKNTLTFTAQAAEGVTYARKIDKSETRVDWTRPAAEVHNHLRGLSPFPGAWSEIDIGGRMERLKLLRSTLSDGLSPSEDLGESGGILDDRLTVACGAGAIRLVEVQRAGGKPAAASEFLRGAKIVKGMKFS.

112-115 (SLLP) lines the (6S)-5,6,7,8-tetrahydrofolate pocket.

This sequence belongs to the Fmt family.

The catalysed reaction is L-methionyl-tRNA(fMet) + (6R)-10-formyltetrahydrofolate = N-formyl-L-methionyl-tRNA(fMet) + (6S)-5,6,7,8-tetrahydrofolate + H(+). Its function is as follows. Attaches a formyl group to the free amino group of methionyl-tRNA(fMet). The formyl group appears to play a dual role in the initiator identity of N-formylmethionyl-tRNA by promoting its recognition by IF2 and preventing the misappropriation of this tRNA by the elongation apparatus. The chain is Methionyl-tRNA formyltransferase from Mesorhizobium japonicum (strain LMG 29417 / CECT 9101 / MAFF 303099) (Mesorhizobium loti (strain MAFF 303099)).